Here is a 322-residue protein sequence, read N- to C-terminus: Short chain dehydrogenase AOL_s00215g274 (322 aa).

NAD(+)-binding positions include 47-48 (AV), 104-106 (IAV), 197-201 (YNVSK), and 230-232 (VAT). The Proton acceptor role is filled by Tyr-197.

Belongs to the short-chain dehydrogenases/reductases (SDR) family.

It functions in the pathway secondary metabolite biosynthesis; terpenoid biosynthesis. Short chain dehydrogenase; part of the gene cluster that mediates the biosynthesis of sesquiterpenyl epoxy-cyclohexenoids (SECs) such as anthrobotrisins and arthrosporols, metabolites that possess a novel hybrid carbon skeleton consisting of a polyketide-derived epoxycyclohexenol combined with a terpenoid-derived monocyclic sesquiterpenol substructure (PKS-PTS hybrid). The SEC pathway plays an important role for fungal soil colonization via decreasing fungal nematode-capturing ability. Within the pathway, the cytochrome P450 monooxygenase AOL_s00215g274 is involved in specific regional ketone reductions at C-4 of farnesyl epoxy-quinone. The pathway begins with the biosynthesis of 6-methylsalicylic acid (6-MSA), the first precursor of the polyketide-derived epoxycyclohexenol in arthrosporols, by the polyketide synthase (PKS) AOL_s00215g283 via condensation of 1 acetate and 3 malonate units. The 6-methylsalicylic acid decarboxylase AOL_s00215g281 then catalyzes the decarboxylation of 6-methylsalicylic acid to yield m-cresol. The cytochrome P450 monooxygenase AOL_s00215g282 further oxidizes m-cresol to yield toluquinol. With the assistance of the oxidoreductase AOL_s00215g277, the polyprenyl transferase AOL_s00215g276 catalyzes the farnesylation of toluquinol to produce farnesyl hydroquinone, the hybrid precursor for biosynthesis of SECs. Farnesyl hydroquinone undergoes epoxidation and then subsequent dehydrogenation to form farnesyl epoxy-quinone, the first and simplest SEC. The cytochrome P450 monooxygenase AOL_s00215g278 and the FAD-dependent monooxygenase AOL_s00215g279 might be involved in the oxygenation of the phenol moiety, most likely in the epoxy formation. The cytochrome P450 monooxygenases AOL_s00215g274 and AOL_s00215g280 are involved in specific regional ketone reductions at respectively C-4 and C-1 of farnesyl epoxy-quinone PubMed:33823587. This chain is Short chain dehydrogenase AOL_s00215g274, found in Arthrobotrys oligospora (strain ATCC 24927 / CBS 115.81 / DSM 1491) (Nematode-trapping fungus).